Reading from the N-terminus, the 1049-residue chain is DEAD-box ATP-dependent RNA helicase 42 (1049 aa).

Disordered regions lie at residues 1-279 and 299-358; these read MGSS…DEID and MPAA…DDEE. Basic and acidic residues predominate over residues 64–106; the sequence is KERDREERKAREREEREKEKERERARRREERDREERSRRREAA. A compositionally biased stretch (basic residues) spans 118-131; sequence RKRRRRSSHHHHHH. Composition is skewed to basic and acidic residues over residues 161–170 and 181–199; these read KKEEEQKQLD and KEWQ…REQE. Residues 201-214 show a composition bias toward low complexity; the sequence is AGVGTSAAAAAAPA. Residues 229–239 show a composition bias toward acidic residues; sequence DGEESDEEGNQ. Low complexity predominate over residues 262 to 272; the sequence is NGGDNANGANA. The span at 304 to 313 shows a compositional bias: basic and acidic residues; it reads VDDKNDKSAK. The segment covering 335–358 has biased composition (acidic residues); that stretch reads EDSDSDYADDEDDEGGSEDEDDEE. The Q motif motif lies at 424-452; that stretch reads KTWVQSGLTSKLLDTIKKLGFEKPMSIQA. Residues 455–633 form the Helicase ATP-binding domain; it reads LPIIMSGRDC…RKVLTKPVEI (179 aa). 468–475 contacts ATP; the sequence is AKTGSGKT. Residues 581–584 carry the DEAD box motif; that stretch reads DEAD. In terms of domain architecture, Helicase C-terminal spans 644–805; that stretch reads DITQLVEVRP…AVPEDLKGLA (162 aa). Positions 816-868 are disordered; the sequence is TEQAHGTGYGGSGFKFNEEEDEARKSAKKAQAREYGYEEDKSDSDSDEEGGVR. The span at 855 to 864 shows a compositional bias: acidic residues; it reads DKSDSDSDEE. A coiled-coil region spans residues 1012–1037; the sequence is TELSVKKAKAELKRVLEDCANHALNL.

Belongs to the DEAD box helicase family. DDX46/PRP5 subfamily.

It catalyses the reaction ATP + H2O = ADP + phosphate + H(+). The sequence is that of DEAD-box ATP-dependent RNA helicase 42 from Oryza sativa subsp. japonica (Rice).